The primary structure comprises 477 residues: Cysteine--tRNA ligase (477 aa).

Residue Cys28 participates in Zn(2+) binding. The 'HIGH' region motif lies at 30-40 (PTVYDYAHIGN). The Zn(2+) site is built by Cys213, His238, and Glu242. The 'KMSKS' region signature appears at 270-274 (KMSKS). Lys273 contacts ATP.

Belongs to the class-I aminoacyl-tRNA synthetase family. Monomer. It depends on Zn(2+) as a cofactor.

It localises to the cytoplasm. It carries out the reaction tRNA(Cys) + L-cysteine + ATP = L-cysteinyl-tRNA(Cys) + AMP + diphosphate. The protein is Cysteine--tRNA ligase (cysS) of Chlamydia trachomatis serovar D (strain ATCC VR-885 / DSM 19411 / UW-3/Cx).